Reading from the N-terminus, the 943-residue chain is Isoleucine--tRNA ligase (943 aa).

The 'HIGH' region signature appears at 59-69 (PYANGQIHLGH). Position 577 (glutamate 577) interacts with L-isoleucyl-5'-AMP. The 'KMSKS' region motif lies at 618-622 (KMSKS). ATP is bound at residue lysine 621. Positions 906, 909, 926, and 929 each coordinate Zn(2+).

The protein belongs to the class-I aminoacyl-tRNA synthetase family. IleS type 1 subfamily. Monomer. It depends on Zn(2+) as a cofactor.

It localises to the cytoplasm. It catalyses the reaction tRNA(Ile) + L-isoleucine + ATP = L-isoleucyl-tRNA(Ile) + AMP + diphosphate. Functionally, catalyzes the attachment of isoleucine to tRNA(Ile). As IleRS can inadvertently accommodate and process structurally similar amino acids such as valine, to avoid such errors it has two additional distinct tRNA(Ile)-dependent editing activities. One activity is designated as 'pretransfer' editing and involves the hydrolysis of activated Val-AMP. The other activity is designated 'posttransfer' editing and involves deacylation of mischarged Val-tRNA(Ile). This chain is Isoleucine--tRNA ligase, found in Xanthomonas campestris pv. campestris (strain B100).